We begin with the raw amino-acid sequence, 2296 residues long: MKGHQFKSWIFELREIVREIKNSHYFLDSWTQFNSVGSFIHIFFHQERFRKLLDPRILSILLLRNSQGSTSNRYFTIKGVVLFLVAALLYRINNRNMVESKNLYLKGLLPIPMNSIGPRNDTSEESFGSSNINRLIVSLLYLTKGKKISESCFRDPKESTWVLPITKKCIMPESNWSSRWWRNWIGKKRDFCCKISNETVAGIDISFKEKDIKYLEFLFVYYMDDPIRKGHDWELFDRLSPSKRRNIINLNSGQLFEILVKDWICYLMFAFREKIPIEVEGFFKQQGAGSTIQSNDIEHVSHLFSRNKWPISLQNCAQFHMWQFHQDLFVSWGKNPHESDFFRKISRENWIWLDNVWLVNKDRFFSKVRNVSSNIQYDSTRSSFVKVTDSSQLNGSSDQFIDPFDSISNEDSEYHTLINQREIQQLKERSILWDPSFIQTEGREIESDRFPKYLSGYSSMPRLFTEREKRMNNNLLPEESEEFLGNPTRAIRSFFSDRWSELHLGSNPTERSTRDQKLLKKEQDVSFVPSRRSENKEIVNIFKIITYLQNTVSIHPISSDLGYDMVPKDELDMDSSNKISFLNKNPFFDLFHLFHERKRGGYTLRHDFEAEERFQEMADLFTLSITEPDLVYHKGFAFSIDSYGLDQRQFLKEVFNSRDESKKKSLLVLPPIFYEENESFYRRIRKNWVRISCGNYLEDPKPKRVVFASNNIIEAVNQYRLIRNLIQIQFQYSPYGYIRNVLNRFFLMKRPDRNFEYGIQRDLIGNDTLNHRTIMKDTINQHLSNLKKSQKKWFDPLIFLSRTERSINRDPNAYRYKWSNGSKNFQEHLEHFVSERKSRFQVMFDRLCINQYSIDWSEVIDKKDLSKSLRFFLSKLLRFFLSKLLRFLSKLLLFLSNSLPFLFVSFENIPIHRSEIHIYELKGPNDQLCNQLLESIGLQIVHLKKLKPFLLDDHNTSQKSKFLINGGTISPFLFNKIPKWIIDSFHTRKNRRKSFDNTDSYFSIVSHDQDNWLNPVKPFQRSSLISSFSKANRLRFLNNPHHFCFYCNKRFPFYVEKAHLNNSDFTYGQFLTILFIHNKIFSSCGGKKKHAFLERDTISPSSIESQVSNIFISNDFPQSGDERYNLYKSFHFPIRSDPLVRRAIYSIADISGTPLIEGQRVNFERTYCQTLSDMNRSDSEEKSLHQYLNFNSNMGLIHTPCSEKYLQRKKRSLRLKSLKRCVDKGQLDRTFQRDSAFSTLSKWNLFQTYMPWFFTSTGYKYLNLIFLDTFSDLLRILSSSQKFVSIFHDIMHGLDISWRILQKKLCLPQRNLISEISSKSLHNLLLSEEMIHRNNESSLISIHLRSPNVREVLYSILFLLLVAGYIVRTHLLFVSRAYSELQTEFEKIKSLMIPSYMIELRKLLDRYPTSELNSFWLKNLFLVALEQLGDCLEEIRGSGGNMLWGGDPAYGVKSIRSKKKDLKINFIDIIDLISIIPNPINRITFSRNTRHLSHTSKEIYSLIRKRKNVSGDWIDDKIESWVANSDSIDDKEREFLVQFSTLRAEKRIDQILLSLTHNDHLSKNDSGYQMIEQPGTIYLRYLVDIHKKYLMNYEFNTSCLAERRIFLAHYQTITYSQTSCGANSFHFPSHGKPFSLRLALSPSRSVLVIGSIGIGRSYLVKYLATNSYVPFITVFLNKFLDNKPKGFFIDDIDIDDSDDIDASNDIDRELDTELELLTMMNALTMDMMSEIDRFYITLQFELAKAMSPCIIWIPNIHDLDVNESNYLALGLLVNSLSRDCERCSTRNILVIASTHIPQKVDPALIAPNKLNTCIKIRRLLIPQQRKHFFTLSYTRGFHLEKKMFHTNGFESITMGSSARDLVALTNEALSISITQKKSIIDTNTIRSALHRQTWDLRSQVRSVQDHGILFYQIGRAVAQNVLISNCPIDPISIYMKKKSCNEGDSYLYKWYFELGTSMKKFTILLYLLSCSAGSVAQDLWSLPGPDEKTRITSYGFIENDSDLVHGLLEVQGALVGSSRTEKDCSQFDNDRVTLLFRSEPRDPLYMMQDGSCSIVDQRFLYEKYESEFEEGEGEGVLDPQQIEEDLFNHIVWAPRIWRPRGFLFDCIERPNELGFPYLAGSFRGRRIIYDEKYELQENDSEFLQSGTMQYQRRDRSSKEQGFFRISQFIWDPADPLFFLFKEQPFVSVFSHREFFADEEMSKGLLTSQTDPPTSIYKRWFIKNTQEKHFELLIQRQRWLRTNSSLSNGFFRSNTLSESYQYLSNLFLSNGTLLDRMTKTLLKKRWLFPDEMKIGFM.

1650–1657 (GSIGIGRS) is an ATP binding site.

It belongs to the Ycf2 family.

It localises to the plastid. The protein resides in the chloroplast stroma. Functionally, probable ATPase of unknown function. Its presence in a non-photosynthetic plant (Epifagus virginiana) and experiments in tobacco indicate that it has an essential function which is probably not related to photosynthesis. This chain is Protein Ycf2, found in Arabis hirsuta (Hairy rock-cress).